Reading from the N-terminus, the 332-residue chain is Beta-chimaerin (332 aa).

The Phorbol-ester/DAG-type zinc-finger motif lies at 78-128 (THNFKVHTFRGPHWCEYCANFMWGLIAQGVRCSDCGLNVHKQCSKHVPNDC). Residues 141-332 (CDLTTLVKAH…ILIENEDVLF (192 aa)) enclose the Rho-GAP domain.

The protein resides in the membrane. With respect to regulation, in the inactive state, the N terminus protrudes into the active site of the Rho-GAP domain, sterically blocking Rac binding. Phospholipid binding to the Phorbol-ester/DAG-type zinc-finger/C1 domain triggers the cooperative dissociation of these interactions, allowing the N-terminus to move out of the active site and thereby activating the enzyme. In terms of biological role, GTPase-activating protein for p21-rac. The sequence is that of Beta-chimaerin (Chn2) from Mus musculus (Mouse).